A 212-amino-acid polypeptide reads, in one-letter code: Peptide methionine sulfoxide reductase MsrA (212 aa).

The active site involves Cys-52.

Belongs to the MsrA Met sulfoxide reductase family.

The enzyme catalyses L-methionyl-[protein] + [thioredoxin]-disulfide + H2O = L-methionyl-(S)-S-oxide-[protein] + [thioredoxin]-dithiol. The catalysed reaction is [thioredoxin]-disulfide + L-methionine + H2O = L-methionine (S)-S-oxide + [thioredoxin]-dithiol. Has an important function as a repair enzyme for proteins that have been inactivated by oxidation. Catalyzes the reversible oxidation-reduction of methionine sulfoxide in proteins to methionine. The polypeptide is Peptide methionine sulfoxide reductase MsrA (Shigella dysenteriae serotype 1 (strain Sd197)).